A 91-amino-acid polypeptide reads, in one-letter code: uncharacterized protein (91 aa).

The tract at residues asparagine 71–glutamate 91 is disordered. Residues serine 76 to glutamate 91 are compositionally biased toward polar residues.

This is an uncharacterized protein from Bacillus subtilis (strain 168).